Reading from the N-terminus, the 286-residue chain is Phosphate import ATP-binding protein PstB (286 aa).

In terms of domain architecture, ABC transporter spans 40–281 (VVARDFSIYY…PKDSMTEDYI (242 aa)). 72–79 (GPSGCGKS) contributes to the ATP binding site.

This sequence belongs to the ABC transporter superfamily. Phosphate importer (TC 3.A.1.7) family. The complex is composed of two ATP-binding proteins (PstB), two transmembrane proteins (PstC and PstA) and a solute-binding protein (PstS).

The protein localises to the cell inner membrane. It carries out the reaction phosphate(out) + ATP + H2O = ADP + 2 phosphate(in) + H(+). In terms of biological role, part of the ABC transporter complex PstSACB involved in phosphate import. Responsible for energy coupling to the transport system. This Chlorobaculum tepidum (strain ATCC 49652 / DSM 12025 / NBRC 103806 / TLS) (Chlorobium tepidum) protein is Phosphate import ATP-binding protein PstB.